We begin with the raw amino-acid sequence, 664 residues long: Transketolase 1 (664 aa).

Histidine 26 serves as a coordination point for substrate. Thiamine diphosphate is bound by residues histidine 66 and 114–116; that span reads GPL. Position 155 (aspartate 155) interacts with Mg(2+). Positions 156 and 185 each coordinate thiamine diphosphate. 2 residues coordinate Mg(2+): asparagine 185 and isoleucine 187. Histidine 260, arginine 357, and serine 384 together coordinate substrate. Histidine 260 provides a ligand contact to thiamine diphosphate. Glutamate 411 acts as the Proton donor in catalysis. Phenylalanine 437 provides a ligand contact to thiamine diphosphate. Positions 461, 469, and 520 each coordinate substrate.

Belongs to the transketolase family. Homodimer. The cofactor is Mg(2+). Ca(2+) is required as a cofactor. It depends on Mn(2+) as a cofactor. Requires Co(2+) as cofactor. Thiamine diphosphate serves as cofactor.

The enzyme catalyses D-sedoheptulose 7-phosphate + D-glyceraldehyde 3-phosphate = aldehydo-D-ribose 5-phosphate + D-xylulose 5-phosphate. Catalyzes the transfer of a two-carbon ketol group from a ketose donor to an aldose acceptor, via a covalent intermediate with the cofactor thiamine pyrophosphate. The sequence is that of Transketolase 1 (tkt1) from Aliivibrio fischeri (strain ATCC 700601 / ES114) (Vibrio fischeri).